Reading from the N-terminus, the 107-residue chain is Proteinase inhibitor 1 (107 aa).

An N-terminal signal peptide occupies residues 1 to 23 (MELKFAHIIVFFLLATSFETLMA). A propeptide spanning residues 24 to 36 (RKESDGPEVIQLL) is cleaved from the precursor.

This sequence belongs to the protease inhibitor I13 (potato type I serine protease inhibitor) family.

This is Proteinase inhibitor 1 from Solanum tuberosum (Potato).